We begin with the raw amino-acid sequence, 272 residues long: WIMGHMVNNIKQIDEFVNLGSNAIETDVSFDKKANPEYTYHGTPCDCGRDCLRWEYFNDFVKALRTATTPGNSKYDKLFLVVFDLKTGSLYDYQASEAGTKLAKNLLQHYWNNGNNGGRAYIILSIPNLKHYKLITGFQQTLKDEGHAELLDKVGYDFSGNDDIGDVQKTYEKAGVTGHVWQSDGITNCLLRGFTRINAAVANRDSANGIINKVYYWTVDKRQTTRDTLDANVDGIMTNYPDITVEILNEDAYKTKFRIATYEDNPWETFKE.

His5 is a catalytic residue. Positions 25 and 27 each coordinate Mg(2+). The active-site Nucleophile is His41. 2 disulfide bridges follow: Cys45–Cys51 and Cys47–Cys189. Asp84 lines the Mg(2+) pocket.

It belongs to the arthropod phospholipase D family. Class II subfamily. Mg(2+) serves as cofactor. Expressed by the venom gland.

The protein resides in the secreted. The catalysed reaction is an N-(acyl)-sphingosylphosphocholine = an N-(acyl)-sphingosyl-1,3-cyclic phosphate + choline. It catalyses the reaction an N-(acyl)-sphingosylphosphoethanolamine = an N-(acyl)-sphingosyl-1,3-cyclic phosphate + ethanolamine. The enzyme catalyses a 1-acyl-sn-glycero-3-phosphocholine = a 1-acyl-sn-glycero-2,3-cyclic phosphate + choline. It carries out the reaction a 1-acyl-sn-glycero-3-phosphoethanolamine = a 1-acyl-sn-glycero-2,3-cyclic phosphate + ethanolamine. Functionally, dermonecrotic toxins cleave the phosphodiester linkage between the phosphate and headgroup of certain phospholipids (sphingolipid and lysolipid substrates), forming an alcohol (often choline) and a cyclic phosphate. This toxin acts on sphingomyelin (SM). It may also act on ceramide phosphoethanolamine (CPE), lysophosphatidylcholine (LPC) and lysophosphatidylethanolamine (LPE), but not on lysophosphatidylserine (LPS), and lysophosphatidylglycerol (LPG). It acts by transphosphatidylation, releasing exclusively cyclic phosphate products as second products. Induces dermonecrosis, hemolysis, increased vascular permeability, edema, inflammatory response, and platelet aggregation. This is Dermonecrotic toxin LvSicTox-alphaIC1bi from Loxosceles variegata (Recluse spider).